The sequence spans 100 residues: Large ribosomal subunit protein uL23 (100 aa).

It belongs to the universal ribosomal protein uL23 family. As to quaternary structure, part of the 50S ribosomal subunit. Contacts protein L29, and trigger factor when it is bound to the ribosome.

In terms of biological role, one of the early assembly proteins it binds 23S rRNA. One of the proteins that surrounds the polypeptide exit tunnel on the outside of the ribosome. Forms the main docking site for trigger factor binding to the ribosome. This is Large ribosomal subunit protein uL23 from Sodalis glossinidius (strain morsitans).